The sequence spans 227 residues: Orotidine 5'-phosphate decarboxylase (227 aa).

Substrate is bound by residues Asp8, Lys30, 59–68 (DLKLYDIPYT), Thr118, Arg178, Gln187, Gly207, and Arg208. The Proton donor role is filled by Lys61.

It belongs to the OMP decarboxylase family. Type 1 subfamily. As to quaternary structure, homodimer.

It catalyses the reaction orotidine 5'-phosphate + H(+) = UMP + CO2. Its pathway is pyrimidine metabolism; UMP biosynthesis via de novo pathway; UMP from orotate: step 2/2. Catalyzes the decarboxylation of orotidine 5'-monophosphate (OMP) to uridine 5'-monophosphate (UMP). This is Orotidine 5'-phosphate decarboxylase from Helicobacter pylori (strain P12).